The sequence spans 419 residues: MGFPRILSKNHKIYTKLGEFCLSGDSFWIVCHTCQEELQTQDAFWKHIQDEHNFLHGVAKQEHNRSSSSSYCLADVESASAVTSNTTSVQTAGNVTTVAVPVALYKYTEDEQRDVAAAVELHEAQHQQQQQQQQHQQQQQQQQHQQQQQHQHHQHQQQQQHLHQQQQQQQQQQRDAAKELAELHAVAAAAAAAGGGGGDSSAHSSSIGGGIDIKVELTPEMQVAAAAAAAASSNTTIYHLSQVVPVSAPAPPPPPPTAAAASSFLSGGAGSATAATIVGVSTTATTTAAAAAAVTTVPQQSQLGSGNNAGAVMQQLGLPLIAVAQELAPKDSNSTTASASSAVSSDDGERWYVCDYGTCGIKFKYKSRMELHRVVHSKERRFNCDMCSASFKQSCNLSTHRKKKHSLRGIKSDLLPQRF.

Residues 29-52 (IVCHTCQEELQTQDAFWKHIQDEH) form a C2H2-type 1 zinc finger. The segment at 121 to 179 (LHEAQHQQQQQQQQHQQQQQQQQHQQQQQHQHHQHQQQQQHLHQQQQQQQQQQRDAAKE) is disordered. 2 stretches are compositionally biased toward low complexity: residues 126 to 149 (HQQQ…QQQQ) and 156 to 173 (QQQQ…QQQQ). 2 C2H2-type zinc fingers span residues 352-376 (YVCD…RVVH) and 382-405 (FNCD…KKKH).

The protein localises to the nucleus. In terms of biological role, may be a transcription factor for genes having (A+T) stretches in their promoter and/or enhancer regions. Binds to AT rich DNA. This Drosophila grimshawi (Hawaiian fruit fly) protein is AT-rich binding protein.